Consider the following 270-residue polypeptide: tRNA pseudouridine synthase A (270 aa).

Asp60 serves as the catalytic Nucleophile. Residue Tyr118 participates in substrate binding.

It belongs to the tRNA pseudouridine synthase TruA family. Homodimer.

It catalyses the reaction uridine(38/39/40) in tRNA = pseudouridine(38/39/40) in tRNA. Formation of pseudouridine at positions 38, 39 and 40 in the anticodon stem and loop of transfer RNAs. The chain is tRNA pseudouridine synthase A from Salmonella agona (strain SL483).